The sequence spans 1014 residues: Klotho (1014 aa).

Positions 1–34 are cleaved as a signal peptide; the sequence is MLARAPPRRPPRLVLLRLLLLHLLLLALRARCLS. The Extracellular segment spans residues 35 to 982; the sequence is AEPGQGAQTW…TECGFFQTRK (948 aa). Glycosyl hydrolase-1 regions lie at residues 59-508 and 517-955; these read LHDT…DNGF and LEGT…SNGF. 6 N-linked (GlcNAc...) asparagine glycosylation sites follow: asparagine 161, asparagine 285, asparagine 346, asparagine 609, asparagine 614, and asparagine 696. A helical membrane pass occupies residues 983-1003; it reads SLLVFISFLVFTFIISLALIF. The Cytoplasmic portion of the chain corresponds to 1004-1014; it reads HYSKKGQRSYK.

The protein belongs to the glycosyl hydrolase 1 family. Klotho subfamily. In terms of assembly, homodimer. Interacts with FGF23 and FGFR1. Post-translationally, N-glycosylated. In terms of tissue distribution, membrane-bound protein is present in distal renal tubules, inner ear, ependymal cells of brain choroid plexus, elongating spermatids and mature oocytes (at protein level). Soluble peptide is present in serum (100 pM) and cerebrospinal fluid. Expressed strongly in kidney, moderately in brain choroid plexus, and at low levels in pituitary, placenta, skeletal muscle, urinary bladder, aorta, pancreas, testis, ovary, colon, thyroid gland and adipocytes.

It localises to the cell membrane. The protein resides in the apical cell membrane. Its subcellular location is the secreted. It carries out the reaction a beta-D-glucuronoside + H2O = D-glucuronate + an alcohol. With respect to regulation, inhibited by D-saccharic acid 1,4-lactone and taurocholic acid. Functionally, may have weak glycosidase activity towards glucuronylated steroids. However, it lacks essential active site Glu residues at positions 241 and 874, suggesting it may be inactive as a glycosidase in vivo. May be involved in the regulation of calcium and phosphorus homeostasis by inhibiting the synthesis of active vitamin D. Essential factor for the specific interaction between FGF23 and FGFR1. Its function is as follows. The Klotho peptide generated by cleavage of the membrane-bound isoform may be an anti-aging circulating hormone which would extend life span by inhibiting insulin/IGF1 signaling. This is Klotho (Kl) from Mus musculus (Mouse).